Reading from the N-terminus, the 718-residue chain is Quinohemoprotein alcohol dehydrogenase ADH-IIG (718 aa).

The N-terminal stretch at Met1 to Ala29 is a signal peptide. Glu92 is a pyrroloquinoline quinone binding site. Cys138 and Cys139 are oxidised to a cystine. Pyrroloquinoline quinone contacts are provided by residues Arg144, Thr189, and Gly205–Ala206. Ca(2+) is bound at residue Glu207. Thr264 is a pyrroloquinoline quinone binding site. Positions 284 and 329 each coordinate Ca(2+). Asp329 (proton acceptor) is an active-site residue. Residue Lys356 participates in pyrroloquinoline quinone binding. Residue Trp415 coordinates substrate. Pyrroloquinoline quinone-binding positions include Asp419–Trp420 and Ala571. The 78-residue stretch at Ala622–Ala699 folds into the Cytochrome c domain. Residues Cys635, Cys638, His639, and Met676 each contribute to the heme c site.

Belongs to the bacterial PQQ dehydrogenase family. In terms of assembly, monomer. It depends on pyrroloquinoline quinone as a cofactor. Ca(2+) serves as cofactor. The cofactor is heme c.

The protein resides in the periplasm. It carries out the reaction 2 oxidized [azurin] + a primary alcohol = 2 reduced [azurin] + an aldehyde + 2 H(+). Exhibits higher affinity for 1-butanol compared to 1,2-propanediol but inhibited by 10 mM 1-butanol. Functionally, catalyzes the dye-linked oxidation of primary alcohols to the corresponding aldehydes and the (subsequent) oxidation of the aldehydes to carboxylic acids. Active with primary alcohols, glycerol, 1,2-propanediol, 1,3-propanediol but not with methanol or sugar alcohols such as D-sorbitol. This is Quinohemoprotein alcohol dehydrogenase ADH-IIG from Pseudomonas putida (Arthrobacter siderocapsulatus).